The sequence spans 281 residues: Large ribosomal subunit protein uL2 (281 aa).

The disordered stretch occupies residues 220–281 (VRGSVMNPND…RRRDGKALSK (62 aa)). A compositionally biased stretch (basic residues) spans 258–271 (KTRKKNKQSNKMIM). Basic and acidic residues predominate over residues 272–281 (RRRDGKALSK).

The protein belongs to the universal ribosomal protein uL2 family. In terms of assembly, part of the 50S ribosomal subunit. Forms a bridge to the 30S subunit in the 70S ribosome.

In terms of biological role, one of the primary rRNA binding proteins. Required for association of the 30S and 50S subunits to form the 70S ribosome, for tRNA binding and peptide bond formation. It has been suggested to have peptidyltransferase activity; this is somewhat controversial. Makes several contacts with the 16S rRNA in the 70S ribosome. The chain is Large ribosomal subunit protein uL2 from Lachnoclostridium phytofermentans (strain ATCC 700394 / DSM 18823 / ISDg) (Clostridium phytofermentans).